The following is a 652-amino-acid chain: Aorsin (652 aa).

The signal sequence occupies residues 1-22 (MRPLSHLSFFNGLLLGLSALSA). A propeptide spans 23–215 (ATSVVHERRE…PRPIQQHDVK (193 aa)) (removed in mature form). Asn112 carries N-linked (GlcNAc...) asparagine glycosylation. The disordered stretch occupies residues 177 to 211 (VNLNPSSGKPSSIRRRAAASKKTKLPARGPRPIQQ). Over residues 188–201 (SIRRRAAASKKTKL) the composition is skewed to basic residues. N-linked (GlcNAc...) asparagine glycans are attached at residues Asn218 and Asn247. Residues 225–651 (LITPECIRAL…PKMLKLWLDL (427 aa)) form the Peptidase S53 domain. Catalysis depends on charge relay system residues Glu301 and Asp305. N-linked (GlcNAc...) asparagine glycans are attached at residues Asn331 and Asn445. Ser569 acts as the Charge relay system in catalysis. Asp610 and Ile611 together coordinate Ca(2+). An N-linked (GlcNAc...) asparagine glycan is attached at Asn613. Ca(2+) is bound by residues Gly629 and Asp631.

Ca(2+) is required as a cofactor. N-glycosylated. Post-translationally, O-glycosylated.

It is found in the secreted. It localises to the extracellular space. Its activity is regulated as follows. Inhibited by antipain and leupeptin. Its function is as follows. Serine endopeptidase which hydrolyzes a range of fluorogenic peptide substrates containing the basic residues arginine or lysine at the P1 position and prefers paired basic resides. Also hydrolyzes clupeine and salmine, activates plasminogen and converts trypsinogen to trypsin. The protein is Aorsin of Aspergillus oryzae (strain ATCC 42149 / RIB 40) (Yellow koji mold).